The following is a 521-amino-acid chain: Zinc finger protein 394 (521 aa).

Positions 1-45 are disordered; that stretch reads MAAGSGVVPPPLGAGLCTVKVEEDSPGNQESSGSGDWQNPETSRK. K20 participates in a covalent cross-link: Glycyl lysine isopeptide (Lys-Gly) (interchain with G-Cter in SUMO2). The span at 26–41 shows a compositional bias: polar residues; that stretch reads PGNQESSGSGDWQNPE. Positions 38–133 constitute an SCAN box domain; sequence QNPETSRKQF…RALDRASPQG (96 aa). The region spanning 135–196 is the KRAB domain; sequence MTFKDVAESL…KQEILKEAEP (62 aa). K259 participates in a covalent cross-link: Glycyl lysine isopeptide (Lys-Gly) (interchain with G-Cter in SUMO2). 3 consecutive C2H2-type zinc fingers follow at residues 327 to 349, 355 to 377, and 383 to 405; these read YKCD…QRIH, YQCQ…QRTH, and YACP…QRTH. The segment at 411-432 adopts a C2H2-type 4; atypical zinc-finger fold; the sequence is YKCEECGEIVHVSSLFRHQRLH. A Glycyl lysine isopeptide (Lys-Gly) (interchain with G-Cter in SUMO2) cross-link involves residue K412. C2H2-type zinc fingers lie at residues 438–460, 466–488, and 494–516; these read YKCG…QRTH, YACV…QRTH, and YKCF…QRIH.

The protein belongs to the krueppel C2H2-type zinc-finger protein family. In terms of tissue distribution, expressed at high level in testis.

It is found in the nucleus. May be involved in transcriptional regulation. This chain is Zinc finger protein 394 (Znf394), found in Mus musculus (Mouse).